A 43-amino-acid polypeptide reads, in one-letter code: Delta-actitoxin-Bca1a (43 aa).

Cystine bridges form between Cys-1/Cys-41, Cys-3/Cys-31, and Cys-24/Cys-42.

Its subcellular location is the secreted. The protein localises to the nematocyst. In terms of biological role, binds specifically to voltage-gated sodium channels (Nav), thereby delaying their inactivation during signal transduction. Thus it strongly stimulates mammalian cardiac muscle contraction. The chain is Delta-actitoxin-Bca1a from Bunodosoma capense (Knobbly sea anemone).